A 423-amino-acid chain; its full sequence is T-box transcription factor T-A (423 aa).

A DNA-binding region (T-box) is located at residues 44 to 212 (LWTKFKELTN…HNPFAKAFLD (169 aa)). Over residues 215–227 (ERSDHKEVPDHST) the composition is skewed to basic and acidic residues. Disordered regions lie at residues 215 to 234 (ERSD…QSGY) and 280 to 304 (AAPY…SSGS). Residues 290 to 304 (RSTTTNNYMDNSSGS) are compositionally biased toward polar residues.

Monomer. Binds DNA as a monomer. In terms of tissue distribution, first expressed at the dorsal side of the blastula embryo. Expressed in the germ ring, shield and chordamesoderm during gastrulation and is restricted to the notochord and tailbud during somitogenesis (at protein level).

Its subcellular location is the nucleus. In terms of biological role, involved in the transcriptional regulation of genes required for mesoderm differentiation, including itself. Indispensable for the formation of the notochord and the tail structure. Functions together with tbx16/spadetail in development of trunk and tail mesoderm. Functions by itself early in development to repress medial floor plate and promote notochord fate but at later times, functions together with tbx16/spadetail to promote medial floor plate formation. Acts in a parallel pathway to, but cooperates with, non-canonical wnt-signaling during tail formation. Required for the morphogenesis of Kupffer's vesicle and regulates left-right asymmetry. In Danio rerio (Zebrafish), this protein is T-box transcription factor T-A (tbxta).